The chain runs to 142 residues: Large ribosomal subunit protein uL13 (142 aa).

It belongs to the universal ribosomal protein uL13 family. As to quaternary structure, part of the 50S ribosomal subunit.

In terms of biological role, this protein is one of the early assembly proteins of the 50S ribosomal subunit, although it is not seen to bind rRNA by itself. It is important during the early stages of 50S assembly. The polypeptide is Large ribosomal subunit protein uL13 (Akkermansia muciniphila (strain ATCC BAA-835 / DSM 22959 / JCM 33894 / BCRC 81048 / CCUG 64013 / CIP 107961 / Muc)).